The following is a 447-amino-acid chain: Maltoporin (447 aa).

The N-terminal stretch at 1–26 is a signal peptide; the sequence is MELRMKKVSVIAAAVAATLAAGSAFA.

It belongs to the porin LamB (TC 1.B.3) family. As to quaternary structure, homotrimer formed of three 18-stranded antiparallel beta-barrels, containing three independent channels.

It is found in the cell outer membrane. It carries out the reaction beta-maltose(in) = beta-maltose(out). Functionally, involved in the transport of maltose and maltodextrins. This is Maltoporin from Vibrio campbellii (strain ATCC BAA-1116).